The sequence spans 260 residues: Deoxyribonuclease-1 (260 aa).

N-linked (GlcNAc...) asparagine glycosylation occurs at Asn-18. Glu-78 is an active-site residue. Cys-101 and Cys-104 are oxidised to a cystine. Residue His-134 is part of the active site. Cysteines 173 and 209 form a disulfide.

It belongs to the DNase I family. The cofactor is Ca(2+). Mg(2+) serves as cofactor.

Its subcellular location is the secreted. It is found in the zymogen granule. The protein localises to the nucleus envelope. It carries out the reaction Endonucleolytic cleavage to 5'-phosphodinucleotide and 5'-phosphooligonucleotide end-products.. In terms of biological role, serum endocuclease secreted into body fluids by a wide variety of exocrine and endocrine organs. Expressed by non-hematopoietic tissues and preferentially cleaves protein-free DNA. Among other functions, seems to be involved in cell death by apoptosis. Binds specifically to G-actin and blocks actin polymerization. Together with DNASE1L3, plays a key role in degrading neutrophil extracellular traps (NETs). NETs are mainly composed of DNA fibers and are released by neutrophils to bind pathogens during inflammation. Degradation of intravascular NETs by DNASE1 and DNASE1L3 is required to prevent formation of clots that obstruct blood vessels and cause organ damage following inflammation. The protein is Deoxyribonuclease-1 (DNASE1) of Ovis aries (Sheep).